Consider the following 332-residue polypeptide: Malate dehydrogenase (332 aa).

NAD(+)-binding positions include 11-16 (GAGNVG) and Asp-35. Substrate is bound by residues Arg-97 and Arg-103. NAD(+) contacts are provided by residues Asn-110 and 133-135 (VTN). Asn-135 and Arg-166 together coordinate substrate. His-190 functions as the Proton acceptor in the catalytic mechanism.

It belongs to the LDH/MDH superfamily. MDH type 3 family.

The enzyme catalyses (S)-malate + NAD(+) = oxaloacetate + NADH + H(+). Functionally, catalyzes the reversible oxidation of malate to oxaloacetate. The protein is Malate dehydrogenase of Hydrogenobaculum sp. (strain Y04AAS1).